The chain runs to 159 residues: Transcriptional repressor NrdR (159 aa).

A zinc finger lies at 3 to 34 (CPTCQNTDSRVLESRSADTGKSVRRRRECLNC). The region spanning 49–139 (ISVLKKDGSR…VYRKFNGVKD (91 aa)) is the ATP-cone domain.

This sequence belongs to the NrdR family. The cofactor is Zn(2+).

Its function is as follows. Negatively regulates transcription of bacterial ribonucleotide reductase nrd genes and operons by binding to NrdR-boxes. In Prochlorococcus marinus (strain MIT 9515), this protein is Transcriptional repressor NrdR.